A 689-amino-acid chain; its full sequence is Glycine--tRNA ligase beta subunit (689 aa).

This sequence belongs to the class-II aminoacyl-tRNA synthetase family. In terms of assembly, tetramer of two alpha and two beta subunits.

It is found in the cytoplasm. It carries out the reaction tRNA(Gly) + glycine + ATP = glycyl-tRNA(Gly) + AMP + diphosphate. This is Glycine--tRNA ligase beta subunit from Escherichia coli O8 (strain IAI1).